The following is a 259-amino-acid chain: Ubiquinone/menaquinone biosynthesis C-methyltransferase UbiE (259 aa).

S-adenosyl-L-methionine is bound by residues T82, D103, 131 to 132 (NA), and S148.

It belongs to the class I-like SAM-binding methyltransferase superfamily. MenG/UbiE family.

The enzyme catalyses a 2-demethylmenaquinol + S-adenosyl-L-methionine = a menaquinol + S-adenosyl-L-homocysteine + H(+). It catalyses the reaction a 2-methoxy-6-(all-trans-polyprenyl)benzene-1,4-diol + S-adenosyl-L-methionine = a 5-methoxy-2-methyl-3-(all-trans-polyprenyl)benzene-1,4-diol + S-adenosyl-L-homocysteine + H(+). It functions in the pathway quinol/quinone metabolism; menaquinone biosynthesis; menaquinol from 1,4-dihydroxy-2-naphthoate: step 2/2. It participates in cofactor biosynthesis; ubiquinone biosynthesis. Its function is as follows. Methyltransferase required for the conversion of demethylmenaquinol (DMKH2) to menaquinol (MKH2) and the conversion of 2-polyprenyl-6-methoxy-1,4-benzoquinol (DDMQH2) to 2-polyprenyl-3-methyl-6-methoxy-1,4-benzoquinol (DMQH2). This chain is Ubiquinone/menaquinone biosynthesis C-methyltransferase UbiE, found in Vibrio parahaemolyticus serotype O3:K6 (strain RIMD 2210633).